Here is an 84-residue protein sequence, read N- to C-terminus: SPbeta prophage-derived uncharacterized protein YomY (84 aa).

The chain is SPbeta prophage-derived uncharacterized protein YomY (yomY) from Bacillus subtilis (strain 168).